A 253-amino-acid polypeptide reads, in one-letter code: 5'-nucleotidase SurE (253 aa).

A divalent metal cation contacts are provided by aspartate 8, aspartate 9, serine 39, and asparagine 96.

This sequence belongs to the SurE nucleotidase family. Requires a divalent metal cation as cofactor.

It localises to the cytoplasm. It carries out the reaction a ribonucleoside 5'-phosphate + H2O = a ribonucleoside + phosphate. Functionally, nucleotidase that shows phosphatase activity on nucleoside 5'-monophosphates. This is 5'-nucleotidase SurE from Rhodopirellula baltica (strain DSM 10527 / NCIMB 13988 / SH1).